A 1620-amino-acid chain; its full sequence is ALK tyrosine kinase receptor (1620 aa).

The signal sequence occupies residues 1–18 (MGAIGLLWLLPLLLSTAA). At 19 to 1038 (VGSGMGTGQR…PHLPLSLILS (1020 aa)) the chain is on the extracellular side. A heparin-binding region region spans residues 48 to 70 (RLQRKSLAVDFVVPSLFRVYARD). 10 N-linked (GlcNAc...) asparagine glycosylation sites follow: asparagine 169, asparagine 244, asparagine 285, asparagine 324, asparagine 411, asparagine 424, asparagine 445, asparagine 563, asparagine 571, and asparagine 627. Positions 264 to 427 (LECSFDFPCE…DFFALKNCSE (164 aa)) constitute an MAM 1 domain. Residues 437–473 (LQSSFTCWNGTVLQLGQACDFHQDCAQGEDESQMCRK) enclose the LDL-receptor class A domain. The region spanning 478 to 636 (FYCNFEDGFC…NISISLDCYL (159 aa)) is the MAM 2 domain. Residues 650 to 674 (PKSRNLFERNPNKELKPGENSPRQT) form a disordered region. A compositionally biased stretch (basic and acidic residues) spans 654–666 (NLFERNPNKELKP). Residues cysteine 688 and cysteine 701 are joined by a disulfide bond. N-linked (GlcNAc...) asparagine glycosylation is present at asparagine 709. Cysteine 783 and cysteine 794 are joined by a disulfide. N-linked (GlcNAc...) asparagine glycosylation is found at asparagine 808, asparagine 863, asparagine 864, and asparagine 886. Cysteine 906 and cysteine 928 form a disulfide bridge. Asparagine 986 is a glycosylation site (N-linked (GlcNAc...) asparagine). 3 disulfides stabilise this stretch: cysteine 987–cysteine 995, cysteine 990–cysteine 1006, and cysteine 1008–cysteine 1021. Residues 987 to 1025 (CSHCEVDECHMDPESHKVICFCDHGTVLAEDGVSCIVSP) are EGF-like. A helical transmembrane segment spans residues 1039–1059 (VVTSALVAALVLAFSGIMIVY). Residues 1060–1620 (RRKHQELQAM…SKNSMNQPGP (561 aa)) are Cytoplasmic-facing. A phosphotyrosine mark is found at tyrosine 1078, tyrosine 1092, and tyrosine 1096. Positions 1116–1392 (ITLIRGLGHG…IEYCTQDPDV (277 aa)) constitute a Protein kinase domain. Histidine 1124 contributes to the ATP binding site. Position 1131 is a phosphotyrosine (tyrosine 1131). ATP-binding positions include lysine 1150 and 1197 to 1199 (ELM). The Proton acceptor role is filled by aspartate 1249. Residue aspartate 1270 coordinates ATP. Tyrosine 1278 carries the phosphotyrosine modification. The disordered stretch occupies residues 1408 to 1463 (EEKVPVRPKDPEGVPPLLVSQQAKREEERSPAAPPPLPTTSSGKAAKKPTAAEISV). Positions 1410 to 1419 (KVPVRPKDPE) are enriched in basic and acidic residues. Tyrosine 1507 carries the phosphotyrosine modification. The segment at 1514–1540 (KPTKKNNPIAKKEPHDRGNLGLEGSCT) is disordered. Residue tyrosine 1604 is modified to Phosphotyrosine.

The protein belongs to the protein kinase superfamily. Tyr protein kinase family. Insulin receptor subfamily. As to quaternary structure, homodimer; homodimerizes following heparin- and ligand-binding. Interacts with CBL, IRS1, PIK3R1 and PLCG1. Interacts with FRS2 and SHC1. Interacts with PTN and MDK. Post-translationally, phosphorylated at tyrosine residues by autocatalysis, which activates kinase activity. In cells not stimulated by a ligand, receptor protein tyrosine phosphatase beta and zeta complex (PTPRB/PTPRZ1) dephosphorylates ALK at the sites in ALK that are undergoing autophosphorylation through autoactivation. Phosphorylation at Tyr-1507 is critical for SHC1 association. N-glycosylated. Expressed in brain and CNS. Also expressed in the small intestine and testis, but not in normal lymphoid cells.

It localises to the cell membrane. It catalyses the reaction L-tyrosyl-[protein] + ATP = O-phospho-L-tyrosyl-[protein] + ADP + H(+). With respect to regulation, activated upon ALKAL2 ligand-binding. ALKAL2-driven activation is coupled with heparin-binding. Following ligand-binding, homodimerizes and autophosphorylates, activating its kinase activity. Inactivated through dephosphorylation by receptor protein tyrosine phosphatase beta and zeta complex (PTPRB/PTPRZ1) when there is no stimulation by a ligand. Staurosporine, crizotinib and CH5424802 act as inhibitors of ALK kinase activity. Its function is as follows. Neuronal receptor tyrosine kinase that is essentially and transiently expressed in specific regions of the central and peripheral nervous systems and plays an important role in the genesis and differentiation of the nervous system. Also acts as a key thinness protein involved in the resistance to weight gain: in hypothalamic neurons, controls energy expenditure acting as a negative regulator of white adipose tissue lipolysis and sympathetic tone to fine-tune energy homeostasis. Following activation by ALKAL2 ligand at the cell surface, transduces an extracellular signal into an intracellular response. In contrast, ALKAL1 is not a potent physiological ligand for ALK. Ligand-binding to the extracellular domain induces tyrosine kinase activation, leading to activation of the mitogen-activated protein kinase (MAPK) pathway. Phosphorylates almost exclusively at the first tyrosine of the Y-x-x-x-Y-Y motif. Induces tyrosine phosphorylation of CBL, FRS2, IRS1 and SHC1, as well as of the MAP kinases MAPK1/ERK2 and MAPK3/ERK1. ALK activation may also be regulated by pleiotrophin (PTN) and midkine (MDK). PTN-binding induces MAPK pathway activation, which is important for the anti-apoptotic signaling of PTN and regulation of cell proliferation. MDK-binding induces phosphorylation of the ALK target insulin receptor substrate (IRS1), activates mitogen-activated protein kinases (MAPKs) and PI3-kinase, resulting also in cell proliferation induction. Drives NF-kappa-B activation, probably through IRS1 and the activation of the AKT serine/threonine kinase. Recruitment of IRS1 to activated ALK and the activation of NF-kappa-B are essential for the autocrine growth and survival signaling of MDK. The chain is ALK tyrosine kinase receptor from Homo sapiens (Human).